We begin with the raw amino-acid sequence, 1179 residues long: DNA-directed RNA polymerase subunit beta (1179 aa).

Belongs to the RNA polymerase beta chain family. As to quaternary structure, the RNAP catalytic core consists of 2 alpha, 1 beta, 1 beta' and 1 omega subunit. When a sigma factor is associated with the core the holoenzyme is formed, which can initiate transcription.

The enzyme catalyses RNA(n) + a ribonucleoside 5'-triphosphate = RNA(n+1) + diphosphate. Functionally, DNA-dependent RNA polymerase catalyzes the transcription of DNA into RNA using the four ribonucleoside triphosphates as substrates. The chain is DNA-directed RNA polymerase subunit beta from Oceanobacillus iheyensis (strain DSM 14371 / CIP 107618 / JCM 11309 / KCTC 3954 / HTE831).